The primary structure comprises 247 residues: ATP synthase subunit a, chloroplastic (247 aa).

A run of 5 helical transmembrane segments spans residues 38–58 (QVLI…IIAV), 95–115 (VPFI…GALL), 134–154 (INTT…AGLT), 199–219 (LVVV…VMFL), and 220–240 (GLFT…AYIG).

This sequence belongs to the ATPase A chain family. F-type ATPases have 2 components, CF(1) - the catalytic core - and CF(0) - the membrane proton channel. CF(1) has five subunits: alpha(3), beta(3), gamma(1), delta(1), epsilon(1). CF(0) has four main subunits: a, b, b' and c.

Its subcellular location is the plastid. The protein resides in the chloroplast thylakoid membrane. In terms of biological role, key component of the proton channel; it plays a direct role in the translocation of protons across the membrane. The sequence is that of ATP synthase subunit a, chloroplastic from Morus indica (Mulberry).